Here is a 241-residue protein sequence, read N- to C-terminus: 1-(5-phosphoribosyl)-5-[(5-phosphoribosylamino)methylideneamino] imidazole-4-carboxamide isomerase (241 aa).

Aspartate 10 (proton acceptor) is an active-site residue. Aspartate 131 acts as the Proton donor in catalysis.

The protein belongs to the HisA/HisF family.

The protein localises to the cytoplasm. The enzyme catalyses 1-(5-phospho-beta-D-ribosyl)-5-[(5-phospho-beta-D-ribosylamino)methylideneamino]imidazole-4-carboxamide = 5-[(5-phospho-1-deoxy-D-ribulos-1-ylimino)methylamino]-1-(5-phospho-beta-D-ribosyl)imidazole-4-carboxamide. Its pathway is amino-acid biosynthesis; L-histidine biosynthesis; L-histidine from 5-phospho-alpha-D-ribose 1-diphosphate: step 4/9. The protein is 1-(5-phosphoribosyl)-5-[(5-phosphoribosylamino)methylideneamino] imidazole-4-carboxamide isomerase of Hyphomonas neptunium (strain ATCC 15444).